The primary structure comprises 491 residues: Protein nucleotidyltransferase YdiU (491 aa).

The ATP site is built by G88, G90, R91, K111, D123, G124, R174, and R181. D250 acts as the Proton acceptor in catalysis. N251 and D260 together coordinate Mg(2+). Position 260 (D260) interacts with ATP.

It belongs to the SELO family. The cofactor is Mg(2+). It depends on Mn(2+) as a cofactor.

It carries out the reaction L-seryl-[protein] + ATP = 3-O-(5'-adenylyl)-L-seryl-[protein] + diphosphate. The enzyme catalyses L-threonyl-[protein] + ATP = 3-O-(5'-adenylyl)-L-threonyl-[protein] + diphosphate. It catalyses the reaction L-tyrosyl-[protein] + ATP = O-(5'-adenylyl)-L-tyrosyl-[protein] + diphosphate. The catalysed reaction is L-histidyl-[protein] + UTP = N(tele)-(5'-uridylyl)-L-histidyl-[protein] + diphosphate. It carries out the reaction L-seryl-[protein] + UTP = O-(5'-uridylyl)-L-seryl-[protein] + diphosphate. The enzyme catalyses L-tyrosyl-[protein] + UTP = O-(5'-uridylyl)-L-tyrosyl-[protein] + diphosphate. Functionally, nucleotidyltransferase involved in the post-translational modification of proteins. It can catalyze the addition of adenosine monophosphate (AMP) or uridine monophosphate (UMP) to a protein, resulting in modifications known as AMPylation and UMPylation. The sequence is that of Protein nucleotidyltransferase YdiU from Bradyrhizobium sp. (strain BTAi1 / ATCC BAA-1182).